The following is a 384-amino-acid chain: Signal peptide peptidase-like 3 (384 aa).

The Lumenal segment spans residues 1-8; it reads MAEQTYSW. A helical transmembrane segment spans residues 9–29; that stretch reads AYSLVDSSQVSTFLISILLIV. Residues 30-73 lie on the Cytoplasmic side of the membrane; it reads YGSFRSLNMDFENQDKEKDSNSSSGSFNGNSTNNSIQTIDSTQA. A helical transmembrane segment spans residues 74–94; that stretch reads LFLPIGASVSLLVMFFFFDSV. A topological domain (lumenal) is located at residue Q95. The helical transmembrane segment at 96–116 threads the bilayer; it reads VVFTICTAVLATIAFAFLLLP. The Cytoplasmic segment spans residues 117–138; that stretch reads MCQYLTRPCSPQNKISFGCCGR. Residues 139-159 form a helical membrane-spanning segment; it reads FTAAELLSFSLSVMLVLIWVL. Residues 160 to 164 are Lumenal-facing; the sequence is TGHWL. Residues 165–185 traverse the membrane as a helical segment; sequence LMDALAMGLCVAMIAFVRLPS. Residues 186-190 lie on the Cytoplasmic side of the membrane; the sequence is LKVSC. A helical transmembrane segment spans residues 191 to 211; that stretch reads LLLSGLLIYDVFWVFFSAYIF. D200 is a catalytic residue. Residues 212 to 262 are Lumenal-facing; the sequence is NSNVMVKVATQPADNPLDVLSRKLHLGPNVGRDVPRLSLPGKLVFPSSTGS. Residues 263 to 283 form a helical membrane-spanning segment; sequence HFSMLGIGDIVMPGLLLCFVL. Residue D271 is part of the active site. Topologically, residues 284–311 are cytoplasmic; it reads RYDNYKKQASGDSCGAPGPANISGRMQK. A helical transmembrane segment spans residues 312–332; sequence VSYFHCTLIGYFVGLLTATVA. At 333–339 the chain is on the lumenal side; it reads SRIHRAA. Residues 340–360 traverse the membrane as a helical segment; sequence QPALLYLVPFTLLPLLTMAYL. The PAL signature appears at 341-343; sequence PAL. The Cytoplasmic portion of the chain corresponds to 361–384; it reads KGDLRRMWSEPFHSKSSSSRFLEV.

The protein belongs to the peptidase A22B family. In terms of assembly, monomer. Homodimer. Interacts with STIM1 (via transmembrane region and SOAR/CAD domain); the interaction promotes the binding of STIM1 to ORAI1. Post-translationally, not glycosylated.

The protein localises to the endoplasmic reticulum membrane. It is found in the golgi apparatus. The protein resides in the membrane. Its activity is regulated as follows. Its proteolytic activity is blocked by a signal peptide peptidase (SPP) inhibitor, (ZLL)2-ketone (ZLL) or a gamma-secretase inhibitor, LY411,575. Functionally, intramembrane-cleaving aspartic protease (I-CLiP) that cleaves type II membrane protein substrates in or close to their luminal transmembrane domain boundaries. Acts like a sheddase by mediating the proteolytic release and secretion of active site-containing ectodomains of glycan-modifiying glycosidase and glycosyltransferase enzymes such as MGAT5, B4GAT1 and B4GALT1. Plays a role in the regulation of cellular glycosylation processes. Required to link T-cell antigen receptor (TCR) and calcineurin-NFAT signaling cascades in lymphocytes by promoting the association of STIM1 and ORAI1 during store-operated calcium entry (SOCE) in a protease-independent manner. The sequence is that of Signal peptide peptidase-like 3 from Mus musculus (Mouse).